Consider the following 394-residue polypeptide: Phosphoglycerate kinase (394 aa).

Substrate contacts are provided by residues 21-23, Arg36, 59-62, Arg118, and Arg151; these read DFN and HLGR. Ser183 carries the post-translational modification Phosphoserine. Lys201 is a binding site for ATP. Thr299 bears the Phosphothreonine mark. ATP is bound by residues Asn316, Glu323, and 350–353; that span reads GGDS.

The protein belongs to the phosphoglycerate kinase family. In terms of assembly, monomer.

It localises to the cytoplasm. It catalyses the reaction (2R)-3-phosphoglycerate + ATP = (2R)-3-phospho-glyceroyl phosphate + ADP. It participates in carbohydrate degradation; glycolysis; pyruvate from D-glyceraldehyde 3-phosphate: step 2/5. In Geobacillus stearothermophilus (Bacillus stearothermophilus), this protein is Phosphoglycerate kinase.